Consider the following 486-residue polypeptide: MILEHRKQEERREDHSKRVVKERQLEANLSCEDRIERKRLLRKLQDEEYGKQIEESLLRAEEDKLFRERQLEQEERMAKELARINNEKLRDEKMRQYIKENSVELRELELKLKSAYLNRERAAQMAEKEAMRYETLREEAMIARTMRDEHELAEMEKEKLEQKKYEEVVRYQQELERQLEEKERKRQEAYEEFLKEKHMVDEIVRKIYMEDQMELQLQLDKMKATQRYIEDFKKQQAEWRRMEREKVEAENRRIIEFAQYQQRKEEDRMAKVREREQAKETLHKMLSEQIELEKQQREKMERAREELCLEEQAEAARQQEIEEMEKRIRQRLELQQTQQEMMAFKKLRLQEEKEEEEAFRQMMMAKFAEDDRIEQMNAQKRRMKQLEHKRAVEQLLEERRQQYLAEQEREEQERAVELEREAQRRKIIEEERQRLLKQHATKLLGYLPKGIFKEEDLEHFDEDFKSNFKQRQADIFSDEGWGDDSQ.

2 coiled-coil regions span residues 52-198 (QIEE…KEKH) and 230-440 (EDFK…KQHA).

It belongs to the MNS1 family.

The protein resides in the nucleus. It is found in the cytoplasm. The protein localises to the cytoskeleton. Its subcellular location is the cilium axoneme. It localises to the flagellum axoneme. Functionally, microtubule inner protein (MIP) part of the dynein-decorated doublet microtubules (DMTs) in cilia axoneme, which is required for motile cilia beating. May play a role in the control of meiotic division and germ cell differentiation through regulation of pairing and recombination during meiosis. Required for sperm flagella assembly. May play a role in the assembly and function of the outer dynein arm-docking complex (ODA-DC). ODA-DC mediates outer dynein arms (ODA) binding onto the axonemal doublet microtubules. The sequence is that of Meiosis-specific nuclear structural protein 1 (mns1) from Danio rerio (Zebrafish).